The chain runs to 187 residues: ATP synthase subunit delta, chloroplastic (187 aa).

It belongs to the ATPase delta chain family. In terms of assembly, F-type ATPases have 2 components, F(1) - the catalytic core - and F(0) - the membrane proton channel. F(1) has five subunits: alpha(3), beta(3), gamma(1), delta(1), epsilon(1). CF(0) has four main subunits: a(1), b(1), b'(1) and c(10-14). The alpha and beta chains form an alternating ring which encloses part of the gamma chain. F(1) is attached to F(0) by a central stalk formed by the gamma and epsilon chains, while a peripheral stalk is formed by the delta, b and b' chains.

The protein resides in the plastid. It is found in the chloroplast thylakoid membrane. F(1)F(0) ATP synthase produces ATP from ADP in the presence of a proton or sodium gradient. F-type ATPases consist of two structural domains, F(1) containing the extramembraneous catalytic core and F(0) containing the membrane proton channel, linked together by a central stalk and a peripheral stalk. During catalysis, ATP synthesis in the catalytic domain of F(1) is coupled via a rotary mechanism of the central stalk subunits to proton translocation. Its function is as follows. This protein is part of the stalk that links CF(0) to CF(1). It either transmits conformational changes from CF(0) to CF(1) or is implicated in proton conduction. The chain is ATP synthase subunit delta, chloroplastic from Trieres chinensis (Marine centric diatom).